Reading from the N-terminus, the 398-residue chain is Transposase for insertion sequence element ISRM5 (398 aa).

This sequence belongs to the transposase mutator family.

In terms of biological role, required for the transposition of the insertion element. The sequence is that of Transposase for insertion sequence element ISRM5 from Rhizobium meliloti (strain 1021) (Ensifer meliloti).